The chain runs to 88 residues: Large ribosomal subunit protein bL27 (88 aa).

Belongs to the bacterial ribosomal protein bL27 family.

The polypeptide is Large ribosomal subunit protein bL27 (Parabacteroides distasonis (strain ATCC 8503 / DSM 20701 / CIP 104284 / JCM 5825 / NCTC 11152)).